Reading from the N-terminus, the 301-residue chain is D-alanine--D-alanine ligase A (301 aa).

The 195-residue stretch at 99 to 293 (KRILAFGNVR…FEELLDTIIE (195 aa)) folds into the ATP-grasp domain. 126-181 (IENLGYPVFVKPNNGGSSVATTLVESKEAVKDAVLEALKYDTEVMIEEYIKGDEIT) contributes to the ATP binding site. Mg(2+)-binding residues include D248, E260, and N262.

This sequence belongs to the D-alanine--D-alanine ligase family. Mg(2+) serves as cofactor. It depends on Mn(2+) as a cofactor.

It is found in the cytoplasm. It catalyses the reaction 2 D-alanine + ATP = D-alanyl-D-alanine + ADP + phosphate + H(+). The protein operates within cell wall biogenesis; peptidoglycan biosynthesis. In terms of biological role, cell wall formation. The polypeptide is D-alanine--D-alanine ligase A (Clostridium perfringens (strain 13 / Type A)).